A 514-amino-acid polypeptide reads, in one-letter code: Pantetheinase (514 aa).

Positions 1 to 22 are cleaved as a signal peptide; that stretch reads MITSRLLVYVAVLVLCVIKVSS. N-linked (GlcNAc...) asparagine glycosylation occurs at Asn39. A CN hydrolase domain is found at 40–307; that stretch reads ATLVPVSHEE…GKLLLSQLDS (268 aa). Glu80 serves as the catalytic Proton acceptor. Residues Asn87 and Asn147 are each glycosylated (N-linked (GlcNAc...) asparagine). Residue Lys179 is the Proton donor of the active site. The active-site Nucleophile is the Cys212. 2 N-linked (GlcNAc...) asparagine glycosylation sites follow: Asn316 and Asn354. A lipid anchor (GPI-anchor amidated aspartate) is attached at Asp492. Positions 493 to 514 are cleaved as a propeptide — removed in mature form; that stretch reads PRSQVPGVMLLVIIPIVCSLSW.

It belongs to the carbon-nitrogen hydrolase superfamily. BTD/VNN family. In terms of assembly, monomer.

Its subcellular location is the cell membrane. The catalysed reaction is (R)-pantetheine + H2O = cysteamine + (R)-pantothenate. Its function is as follows. Amidohydrolase that hydrolyzes specifically one of the carboamide linkages in D-pantetheine thus recycling pantothenic acid (vitamin B5) and releasing cysteamine. This chain is Pantetheinase (VNN1), found in Canis lupus familiaris (Dog).